The chain runs to 356 residues: DNA polymerase IV (356 aa).

The UmuC domain maps to 4-185 (IIHIDMDCYY…LALGKIPGVG (182 aa)). Mg(2+)-binding residues include Asp-8 and Asp-103. Glu-104 is a catalytic residue.

The protein belongs to the DNA polymerase type-Y family. In terms of assembly, monomer. The cofactor is Mg(2+).

It localises to the cytoplasm. It catalyses the reaction DNA(n) + a 2'-deoxyribonucleoside 5'-triphosphate = DNA(n+1) + diphosphate. Functionally, poorly processive, error-prone DNA polymerase involved in untargeted mutagenesis. Copies undamaged DNA at stalled replication forks, which arise in vivo from mismatched or misaligned primer ends. These misaligned primers can be extended by PolIV. Exhibits no 3'-5' exonuclease (proofreading) activity. May be involved in translesional synthesis, in conjunction with the beta clamp from PolIII. The polypeptide is DNA polymerase IV (Pseudoalteromonas atlantica (strain T6c / ATCC BAA-1087)).